Consider the following 209-residue polypeptide: Small ribosomal subunit protein uS4 (209 aa).

The S4 RNA-binding domain maps to 98 to 164 (RRLDNVVYRL…LPVKNAIELN (67 aa)).

Belongs to the universal ribosomal protein uS4 family. Part of the 30S ribosomal subunit. Contacts protein S5. The interaction surface between S4 and S5 is involved in control of translational fidelity.

Its function is as follows. One of the primary rRNA binding proteins, it binds directly to 16S rRNA where it nucleates assembly of the body of the 30S subunit. In terms of biological role, with S5 and S12 plays an important role in translational accuracy. The sequence is that of Small ribosomal subunit protein uS4 from Thermosipho africanus (strain TCF52B).